A 95-amino-acid polypeptide reads, in one-letter code: MGLERDGILSQDLHFNEVFVSLWQNKLTRYEIARVISARALQLAMGAPALIDINNISLTDVISIAEEEFKRGVLPITIRRRLPNGKIILLSLRKS.

It belongs to the archaeal Rpo6/eukaryotic RPB6 RNA polymerase subunit family. As to quaternary structure, part of the RNA polymerase complex.

The protein resides in the cytoplasm. The enzyme catalyses RNA(n) + a ribonucleoside 5'-triphosphate = RNA(n+1) + diphosphate. Functionally, DNA-dependent RNA polymerase (RNAP) catalyzes the transcription of DNA into RNA using the four ribonucleoside triphosphates as substrates. The protein is DNA-directed RNA polymerase subunit Rpo6 of Saccharolobus islandicus (strain M.16.27) (Sulfolobus islandicus).